The chain runs to 242 residues: Mitochondrial intermembrane space import and assembly protein 40 (242 aa).

The N-terminal 18 residues, 1-18 (MFARSFSNASRTIARRSL), are a transit peptide targeting the mitochondrion. The segment covering 1-22 (MFARSFSNASRTIARRSLSTRS) has biased composition (polar residues). The tract at residues 1–30 (MFARSFSNASRTIARRSLSTRSGPAPSSLW) is disordered. Residues 19–34 (STRSGPAPSSLWSSRN) are Mitochondrial matrix-facing. Residues 35–51 (AVIAGTTLAITALAVTS) traverse the membrane as a helical; Signal-anchor for type II membrane protein segment. The Mitochondrial intermembrane portion of the chain corresponds to 52 to 242 (ERRKVFNESA…EETAAPAAAP (191 aa)). The interval 58-111 (NESAQKATSPRDSIIAQDSLKENVHKKSVRQDEFSGESTKPEASTSSDSVEKAA) is disordered. The span at 59 to 68 (ESAQKATSPR) shows a compositional bias: polar residues. Positions 76–90 (SLKENVHKKSVRQDE) are enriched in basic and acidic residues. The span at 93–105 (GESTKPEASTSSD) shows a compositional bias: polar residues. 3 cysteine pairs are disulfide-bonded: Cys144/Cys146, Cys155/Cys188, and Cys165/Cys178. The 45-residue stretch at 152–196 (TGPCGEQFKAAFSCFVYSEAEPKGVDCVELFKVMQDCFREHPEIY) folds into the CHCH domain. Short sequence motifs (cx9C motif) lie at residues 155-165 (CGEQFKAAFSC) and 178-188 (CVELFKVMQDC). The tract at residues 215–242 (DEAPPQEGTMEEKVEAAKEETAAPAAAP) is disordered. Basic and acidic residues predominate over residues 224–235 (MEEKVEAAKEET).

Monomer. The cofactor is Cu(2+). Requires Zn(2+) as cofactor.

The protein resides in the mitochondrion inner membrane. Functionally, required for the import and folding of small cysteine-containing proteins (small Tim) in the mitochondrial intermembrane space (IMS). Forms a redox cycle with ERV1 that involves a disulfide relay system. Precursor proteins to be imported into the IMS are translocated in their reduced form into the mitochondria. The oxidized form of MIA40 forms a transient intermolecular disulfide bridge with the reduced precursor protein, resulting in oxidation of the precursor protein that now contains an intramolecular disulfide bond and is able to undergo folding in the IMS. The protein is Mitochondrial intermembrane space import and assembly protein 40 (MIA40) of Cryptococcus neoformans var. neoformans serotype D (strain B-3501A) (Filobasidiella neoformans).